Here is a 326-residue protein sequence, read N- to C-terminus: L-Ala--D-Glu endopeptidase (326 aa).

An N-terminal signal peptide occupies residues 1 to 19 (MKVLLSALLLLLFAFEPSA). Zn(2+) contacts are provided by His-204, Asp-208, His-292, and His-294.

The protein belongs to the peptidase M23B family. Requires Zn(2+) as cofactor.

Its function is as follows. L-Ala--D-Glu endopeptidase involved in production of single L-alanine side chains from tetrapeptides in the spore cortex peptidoglycan. Therefore, is required for the endospore cortex maturation. This chain is L-Ala--D-Glu endopeptidase (lytH), found in Bacillus subtilis (strain 168).